A 1755-amino-acid chain; its full sequence is Transposon Ty1-ML1 Gag-Pol polyprotein (1755 aa).

Composition is skewed to polar residues over residues Met-1 to Ser-23, Thr-48 to Ser-60, and Gln-127 to Phe-152. Disordered regions lie at residues Met-1–Gln-88, Pro-126–Pro-173, and Gly-352–Thr-421. The span at Thr-153–Thr-165 shows a compositional bias: low complexity. An RNA-binding region spans residues Asn-299 to His-401. Residues Asn-402 to Ser-418 show a composition bias toward low complexity. Asp-461 serves as the catalytic For protease activity; shared with dimeric partner. The segment at Asn-583–Cys-640 is integrase-type zinc finger-like. The Integrase catalytic domain occupies Asn-660–Pro-835. Mg(2+) contacts are provided by Asp-671 and Asp-736. Disordered stretches follow at residues Ser-956–Lys-1087, Arg-1092–Pro-1111, and Asp-1130–Ala-1171. Residues Ser-960–Thr-969 show a composition bias toward low complexity. The span at Ser-1005–Thr-1015 shows a compositional bias: polar residues. Residues Glu-1038–Ser-1053 show a composition bias toward basic and acidic residues. Composition is skewed to polar residues over residues Tyr-1054–Asp-1082 and Pro-1101–Pro-1111. The Bipartite nuclear localization signal signature appears at Lys-1178–Arg-1212. Positions Asn-1338–Gln-1476 constitute a Reverse transcriptase Ty1/copia-type domain. Asp-1346, Asp-1427, Asp-1428, Asp-1610, Glu-1652, and Asp-1685 together coordinate Mg(2+). The region spanning Asp-1610–Lys-1752 is the RNase H Ty1/copia-type domain.

As to quaternary structure, the capsid protein forms a homotrimer, from which the VLPs are assembled. The protease is a homodimer, whose active site consists of two apposed aspartic acid residues. In terms of processing, initially, virus-like particles (VLPs) are composed of the structural unprocessed proteins Gag and Gag-Pol, and also contain the host initiator methionine tRNA (tRNA(i)-Met) which serves as a primer for minus-strand DNA synthesis, and a dimer of genomic Ty RNA. Processing of the polyproteins occurs within the particle and proceeds by an ordered pathway, called maturation. First, the protease (PR) is released by autocatalytic cleavage of the Gag-Pol polyprotein yielding capsid protein p45 and a Pol-p154 precursor protein. This cleavage is a prerequisite for subsequent processing of Pol-p154 at the remaining sites to release the mature structural and catalytic proteins. Maturation takes place prior to the RT reaction and is required to produce transposition-competent VLPs.

It localises to the cytoplasm. The protein resides in the nucleus. It carries out the reaction DNA(n) + a 2'-deoxyribonucleoside 5'-triphosphate = DNA(n+1) + diphosphate. It catalyses the reaction Endonucleolytic cleavage to 5'-phosphomonoester.. Capsid protein (CA) is the structural component of the virus-like particle (VLP), forming the shell that encapsulates the retrotransposons dimeric RNA genome. The particles are assembled from trimer-clustered units and there are holes in the capsid shells that allow for the diffusion of macromolecules. CA also has nucleocapsid-like chaperone activity, promoting primer tRNA(i)-Met annealing to the multipartite primer-binding site (PBS), dimerization of Ty1 RNA and initiation of reverse transcription. Its function is as follows. The aspartyl protease (PR) mediates the proteolytic cleavages of the Gag and Gag-Pol polyproteins after assembly of the VLP. In terms of biological role, reverse transcriptase/ribonuclease H (RT) is a multifunctional enzyme that catalyzes the conversion of the retro-elements RNA genome into dsDNA within the VLP. The enzyme displays a DNA polymerase activity that can copy either DNA or RNA templates, and a ribonuclease H (RNase H) activity that cleaves the RNA strand of RNA-DNA heteroduplexes during plus-strand synthesis and hydrolyzes RNA primers. The conversion leads to a linear dsDNA copy of the retrotransposon that includes long terminal repeats (LTRs) at both ends. Functionally, integrase (IN) targets the VLP to the nucleus, where a subparticle preintegration complex (PIC) containing at least integrase and the newly synthesized dsDNA copy of the retrotransposon must transit the nuclear membrane. Once in the nucleus, integrase performs the integration of the dsDNA into the host genome. This chain is Transposon Ty1-ML1 Gag-Pol polyprotein (TY1B-ML1), found in Saccharomyces cerevisiae (strain ATCC 204508 / S288c) (Baker's yeast).